Here is a 135-residue protein sequence, read N- to C-terminus: MWMNFESLQIARAYLFGEVKYLDLMLVLNIIDIITGVIKAWKFKELRSRSAWFGYVRKMLSFLVVIVANAIDTIMDLNGVLTFATVLFYIANEGLSITENLAQIGVKIPAVITDRLHVIESDNDQKTEKDDQAAG.

The next 2 membrane-spanning stretches (helical) occupy residues leucine 24–tryptophan 41 and phenylalanine 62–alanine 84.

It belongs to the bacteriophage holin family. Cp-1 holin subfamily.

It is found in the host membrane. Produces a lesion in the cytoplasmic membrane allowing the phage lysosyme to attack the peptidoglycan. This Bacillus phage phi105 (Bacteriophage phi-105) protein is Probable holin (45).